Consider the following 385-residue polypeptide: MIKKRQTRIAMIAGEMSGDLLGAGVIRELKKHLKNVEFIGVGGPQMLEEGFQSLANMSELSVMGISDVLRRYPQLYFIRERLLKEWTINPPDVFIGIDYPDFNLSVETRLKRQNVKTVHLVSPKVWAWRQKRVYLIKKAVDLVLTLFPFEESFYQQYDVPAQFVGHPLADLIEINPNNADLRKKYNYKPDDTILAVLPGSRIGEIKYIGPLFLEVMQRIAVEMPHVHFIVPIACQELYPVFFKQFQARYSHLKIQIIQGNAREAMAISDVVLTKSGTATLEAMLLKRPMVVAFKWSKFTHAIIAPQVKIPYVALPNLLANKKLVPEFVQEKATANSITESVLNLLACPSQSNLNKQFTAIHHTLRQNANEKAALSILKILETSSA.

It belongs to the LpxB family.

It carries out the reaction a lipid X + a UDP-2-N,3-O-bis[(3R)-3-hydroxyacyl]-alpha-D-glucosamine = a lipid A disaccharide + UDP + H(+). The protein operates within bacterial outer membrane biogenesis; LPS lipid A biosynthesis. Condensation of UDP-2,3-diacylglucosamine and 2,3-diacylglucosamine-1-phosphate to form lipid A disaccharide, a precursor of lipid A, a phosphorylated glycolipid that anchors the lipopolysaccharide to the outer membrane of the cell. The chain is Lipid-A-disaccharide synthase 2 from Legionella pneumophila (strain Lens).